The chain runs to 659 residues: L-type lectin-domain containing receptor kinase V.7 (659 aa).

An N-terminal signal peptide occupies residues 1–25 (MSHKVLQIVLVLLLTLFSSTHNSNG). Residues 22 to 244 (NSNGNFLMEE…GALYYVMQFS (223 aa)) are legume-lectin like. The Extracellular portion of the chain corresponds to 26-275 (NFLMEEAAAA…PKKSYDRTRR (250 aa)). Residues Asn-45, Asn-64, Asn-110, and Asn-192 are each glycosylated (N-linked (GlcNAc...) asparagine). A helical transmembrane segment spans residues 276–296 (ILAVCLTLAVFTALVASGIGF). At 297–659 (VFYVRHKKVK…LTNSFVSHGR (363 aa)) the chain is on the cytoplasmic side. The region spanning 333 to 595 (FKEKQLLGKG…GLLCAHHTEL (263 aa)) is the Protein kinase domain. ATP contacts are provided by residues 339–347 (LGKGGFGQV) and Lys-362. Asp-462 (proton acceptor) is an active-site residue.

This sequence in the C-terminal section; belongs to the protein kinase superfamily. Ser/Thr protein kinase family. In the N-terminal section; belongs to the leguminous lectin family.

The protein resides in the cell membrane. It carries out the reaction L-seryl-[protein] + ATP = O-phospho-L-seryl-[protein] + ADP + H(+). The enzyme catalyses L-threonyl-[protein] + ATP = O-phospho-L-threonyl-[protein] + ADP + H(+). In terms of biological role, involved in resistance response to the pathogenic oomycetes Phytophthora infestans and Phytophthora capsici and to the pathogenic bacteria Pseudomonas syringae. The sequence is that of L-type lectin-domain containing receptor kinase V.7 from Arabidopsis thaliana (Mouse-ear cress).